Here is a 281-residue protein sequence, read N- to C-terminus: NADPH-dependent 7-cyano-7-deazaguanine reductase (281 aa).

Position 88 to 90 (88 to 90 (IES)) interacts with substrate. Position 90–91 (90–91 (SK)) interacts with NADPH. Catalysis depends on Cys189, which acts as the Thioimide intermediate. The active-site Proton donor is the Asp196. 228-229 (HE) serves as a coordination point for substrate. 257–258 (RG) contacts NADPH.

Belongs to the GTP cyclohydrolase I family. QueF type 2 subfamily. Homodimer.

The protein localises to the cytoplasm. It catalyses the reaction 7-aminomethyl-7-carbaguanine + 2 NADP(+) = 7-cyano-7-deazaguanine + 2 NADPH + 3 H(+). It functions in the pathway tRNA modification; tRNA-queuosine biosynthesis. In terms of biological role, catalyzes the NADPH-dependent reduction of 7-cyano-7-deazaguanine (preQ0) to 7-aminomethyl-7-deazaguanine (preQ1). The sequence is that of NADPH-dependent 7-cyano-7-deazaguanine reductase from Sodalis glossinidius (strain morsitans).